The sequence spans 167 residues: Large ribosomal subunit protein uL22 (167 aa).

The disordered stretch occupies residues 120-167 (GSTATTVEDEAPKAKGAKGAKAKKAPAKKAAAKKAPAKKFAGKKTAKR). The span at 134–167 (KGAKGAKAKKAPAKKAAAKKAPAKKFAGKKTAKR) shows a compositional bias: basic residues.

It belongs to the universal ribosomal protein uL22 family. Part of the 50S ribosomal subunit.

Functionally, this protein binds specifically to 23S rRNA; its binding is stimulated by other ribosomal proteins, e.g. L4, L17, and L20. It is important during the early stages of 50S assembly. It makes multiple contacts with different domains of the 23S rRNA in the assembled 50S subunit and ribosome. The globular domain of the protein is located near the polypeptide exit tunnel on the outside of the subunit, while an extended beta-hairpin is found that lines the wall of the exit tunnel in the center of the 70S ribosome. In Koribacter versatilis (strain Ellin345), this protein is Large ribosomal subunit protein uL22.